A 521-amino-acid chain; its full sequence is Amidase 1 (521 aa).

Catalysis depends on charge relay system residues lysine 112 and serine 187. Substrate-binding positions include serine 187 and 208 to 211; that span reads IGGS. Serine 211 acts as the Acyl-ester intermediate in catalysis.

The protein belongs to the amidase family.

It catalyses the reaction a monocarboxylic acid amide + H2O = a monocarboxylate + NH4(+). The protein operates within xenobiotic degradation. Functionally, amidase; part of the Fusarium detoxification of benzoxazolinone cluster 1 (FDB1) involved in the degradation of benzoxazolinones produced by the host plant. Maize, wheat, and rye produce the 2 benzoxazinone phytoanticipins 2,4-dihy-droxy-7-methoxy-1,4-benzoxazin-3-one (DIMBOA) and 2,4-dihydroxy-1,4-benzoxazin-3-one (DIBOA) that, due to their inherent instability once released, spontaneously degrade to the more stable corresponding benzoxazolinones, 6-methoxy-2-benzoxazolinone (MBOA) and 2-benzoxazolinone (BOA), respectively. The first step in the detoxification of benzoxazolinones involves the hydrolysis of the cyclic ester bond of benzoxazolinones by the FDB1 cluster gamma-lactamase MBL1 to aminophenols. MBL1 is able to convert BOA into 2-aminophenol (2-AP), as well as MBOA into 5-methoxy-2-aminophenol (2-AMP). The FDB2 cluster N-malonyltransferase FDB2/NAT1 then metabolizes aminophenols via N-malonylation to non-toxic malonamic acids. FDB2/NAT1 converts 2-AP into N-(2-hydroxyphenyl) malonamic acid (HPMA) and 2-AMP into N-(2-hydroxy-4-methoxyphenyl) malonamic acid (HMPMA). The duplicated dienlactone hydrolases DLH1 and DLH2 may provide redundant function for hydrolyzing the lactone moiety in the BOA molecule. The roles of the amidases an other enzymes encoded by the 2 FDB clusters have not been identified so far. This is Amidase 1 from Gibberella moniliformis (strain M3125 / FGSC 7600) (Maize ear and stalk rot fungus).